Consider the following 681-residue polypeptide: Proline-rich receptor-like protein kinase PERK8 (681 aa).

Pro residues predominate over residues 1–11 (MSLVPPLPILS). Residues 1–231 (MSLVPPLPIL…TLPSSSPGKS (231 aa)) are disordered. The Extracellular portion of the chain corresponds to 1–237 (MSLVPPLPIL…PGKSEVGTGG (237 aa)). The N-linked (GlcNAc...) asparagine glycan is linked to N16. Pro residues predominate over residues 21 to 163 (APPPLQTQPT…SPPKPSPSTP (143 aa)). The segment covering 177–191 (TSASPPSSNPTDPST) has biased composition (low complexity). A compositionally biased stretch (pro residues) spans 192–201 (LAPPPTPLPV). A compositionally biased stretch (polar residues) spans 214-229 (PASNNGNNTLPSSSPG). Residue N220 is glycosylated (N-linked (GlcNAc...) asparagine). Residues 238-258 (IVAIGVIVGLVFLSLFVMGVW) form a helical membrane-spanning segment. Residues 259–681 (FTRKRKRKDP…GSRDQSRFVP (423 aa)) are Cytoplasmic-facing. Residues 339–617 (FSEKNLLGEG…SQVVRALDTL (279 aa)) form the Protein kinase domain. ATP is bound by residues 345–353 (LGEGGFGCV) and K367. Position 412 is a phosphotyrosine (Y412). The active-site Proton acceptor is the D463. S467 and S498 each carry phosphoserine. A phosphothreonine mark is found at T499 and T504. Y512 carries the post-translational modification Phosphotyrosine.

This sequence belongs to the protein kinase superfamily. Ser/Thr protein kinase family. In terms of assembly, interacts with KIPK1 and KIPK2 (via its cytosolic domain). Mostly expressed in seedlings, roots, inflorescence bolts and flower buds.

It is found in the cell membrane. The catalysed reaction is L-seryl-[protein] + ATP = O-phospho-L-seryl-[protein] + ADP + H(+). The enzyme catalyses L-threonyl-[protein] + ATP = O-phospho-L-threonyl-[protein] + ADP + H(+). Functionally, could be involved in the negative regulation of root growth. The sequence is that of Proline-rich receptor-like protein kinase PERK8 (PERK8) from Arabidopsis thaliana (Mouse-ear cress).